Reading from the N-terminus, the 125-residue chain is Histone H2B (125 aa).

A disordered region spans residues 1 to 32 (MAPKVRAAKKGEKRVGKAKSGTAETAKRRRGK). S112 carries O-linked (GlcNAc) serine glycosylation. A Glycyl lysine isopeptide (Lys-Gly) (interchain with G-Cter in ubiquitin) cross-link involves residue K120.

The protein belongs to the histone H2B family. The nucleosome is a histone octamer containing two molecules each of H2A, H2B, H3 and H4 assembled in one H3-H4 heterotetramer and two H2A-H2B heterodimers. The octamer wraps approximately 147 bp of DNA. In terms of processing, monoubiquitination of Lys-120 gives a specific tag for epigenetic transcriptional activation and is also prerequisite for histone H3 'Lys-4' and 'Lys-79' methylation. Post-translationally, glcNAcylation at Ser-112 promotes monoubiquitination of Lys-120. It fluctuates in response to extracellular glucose, and associates with transcribed genes.

It is found in the nucleus. The protein resides in the chromosome. Its function is as follows. Core component of nucleosome. Nucleosomes wrap and compact DNA into chromatin, limiting DNA accessibility to the cellular machineries which require DNA as a template. Histones thereby play a central role in transcription regulation, DNA repair, DNA replication and chromosomal stability. DNA accessibility is regulated via a complex set of post-translational modifications of histones, also called histone code, and nucleosome remodeling. The polypeptide is Histone H2B (Acropora formosa (Staghorn coral)).